Here is a 448-residue protein sequence, read N- to C-terminus: Divalent metal cation transporter MntH (448 aa).

The next 11 helical transmembrane spans lie at 41-61, 69-89, 117-137, 147-167, 176-196, 215-235, 270-290, 307-327, 363-383, 384-404, and 424-444; these read LFAF…PGNW, SEFG…AVLL, GFVL…AEVI, FGIP…LVLF, IEVI…AEMV, IVTN…TVMP, FSLT…AAAF, LLNP…ALLA, VLAI…GINE, LLIF…IPLV, and IVSW…LFYT.

It belongs to the NRAMP family.

Its subcellular location is the cell membrane. H(+)-stimulated, divalent metal cation uptake system. The protein is Divalent metal cation transporter MntH of Listeria innocua serovar 6a (strain ATCC BAA-680 / CLIP 11262).